The following is a 404-amino-acid chain: MKLPIYLDYSATTPVDPRVAEKMMQFLTLDGTFGNPASRSHRFGWQAEEAVDIARNQIAELVGADPREIVFTSGATESDNLAIKGAANFYQKKGKHIITSKTEHKAVLDTCRQLEREGFEVTYLAPQRNGIIDLNELEAAMRDDTILVSIMHVNNEIGVVQDIATIGEMCRARGIIYHVDATQSVGKLPIDLSQLKVDLMSFSGHKIYGPKGIGALYVRRKPRIRIEAQMHGGGHERGMRSGTLPVHQIVGMGEAYRIAKEEMETEMARLRGLRNRLWNGIKDIEEVYLNGDLEQGAPNILNVSFNYVEGESLIMALKDLAVSSGSACTSATLEPSYVLRALGMNDELAHSSIRFSLGRFTTEEEIDYTIDLVRKSIGRLRDLSPLWEMYKQGVDLNSIEWAHH.

Pyridoxal 5'-phosphate contacts are provided by residues 75–76 (AT), N155, Q183, and 203–205 (SGH). K206 is subject to N6-(pyridoxal phosphate)lysine. T243 is a binding site for pyridoxal 5'-phosphate. The Cysteine persulfide intermediate role is filled by C328. Residue C328 participates in [2Fe-2S] cluster binding.

The protein belongs to the class-V pyridoxal-phosphate-dependent aminotransferase family. NifS/IscS subfamily. As to quaternary structure, homodimer. Forms a heterotetramer with IscU, interacts with other sulfur acceptors. Pyridoxal 5'-phosphate serves as cofactor.

It localises to the cytoplasm. It catalyses the reaction (sulfur carrier)-H + L-cysteine = (sulfur carrier)-SH + L-alanine. It participates in cofactor biosynthesis; iron-sulfur cluster biosynthesis. Master enzyme that delivers sulfur to a number of partners involved in Fe-S cluster assembly, tRNA modification or cofactor biosynthesis. Catalyzes the removal of elemental sulfur and selenium atoms from cysteine and selenocysteine to produce alanine. Functions as a sulfur delivery protein for Fe-S cluster synthesis onto IscU, an Fe-S scaffold assembly protein, as well as other S acceptor proteins. Also functions as a selenium delivery protein in the pathway for the biosynthesis of selenophosphate. This Salmonella typhi protein is Cysteine desulfurase IscS.